The following is a 61-amino-acid chain: Large ribosomal subunit protein uL30 (61 aa).

This sequence belongs to the universal ribosomal protein uL30 family. As to quaternary structure, part of the 50S ribosomal subunit.

In Teredinibacter turnerae (strain ATCC 39867 / T7901), this protein is Large ribosomal subunit protein uL30.